Reading from the N-terminus, the 338-residue chain is Anthranilate phosphoribosyltransferase (338 aa).

Residues Gly-81, 84-85 (GD), Thr-89, 91-94 (NIST), 109-117 (KHGNRALSS), and Ala-121 each bind 5-phospho-alpha-D-ribose 1-diphosphate. An anthranilate-binding site is contributed by Gly-81. Ser-93 lines the Mg(2+) pocket. Asn-112 provides a ligand contact to anthranilate. Arg-167 serves as a coordination point for anthranilate. Positions 225 and 226 each coordinate Mg(2+).

The protein belongs to the anthranilate phosphoribosyltransferase family. Homodimer. Requires Mg(2+) as cofactor.

It catalyses the reaction N-(5-phospho-beta-D-ribosyl)anthranilate + diphosphate = 5-phospho-alpha-D-ribose 1-diphosphate + anthranilate. It functions in the pathway amino-acid biosynthesis; L-tryptophan biosynthesis; L-tryptophan from chorismate: step 2/5. Its function is as follows. Catalyzes the transfer of the phosphoribosyl group of 5-phosphorylribose-1-pyrophosphate (PRPP) to anthranilate to yield N-(5'-phosphoribosyl)-anthranilate (PRA). This is Anthranilate phosphoribosyltransferase from Rhizobium etli (strain ATCC 51251 / DSM 11541 / JCM 21823 / NBRC 15573 / CFN 42).